We begin with the raw amino-acid sequence, 308 residues long: UDP-N-acetylenolpyruvoylglucosamine reductase (308 aa).

The 166-residue stretch at 35-200 folds into the FAD-binding PCMH-type domain; it reads RVGGPAQVLF…TSARFRGEPM (166 aa). Arg-180 is a catalytic residue. Residues 211 to 226 are compositionally biased toward basic and acidic residues; the sequence is EVQRHRETAQPVREKT. Residues 211–236 are disordered; sequence EVQRHRETAQPVREKTGGSTFKNPPG. Ser-229 (proton donor) is an active-site residue. The active site involves Glu-299.

This sequence belongs to the MurB family. The cofactor is FAD.

The protein resides in the cytoplasm. The enzyme catalyses UDP-N-acetyl-alpha-D-muramate + NADP(+) = UDP-N-acetyl-3-O-(1-carboxyvinyl)-alpha-D-glucosamine + NADPH + H(+). Its pathway is cell wall biogenesis; peptidoglycan biosynthesis. In terms of biological role, cell wall formation. The sequence is that of UDP-N-acetylenolpyruvoylglucosamine reductase from Rhodopseudomonas palustris (strain BisB18).